The following is a 458-amino-acid chain: ATP synthase subunit beta (458 aa).

148 to 155 (GGAGVGKT) lines the ATP pocket.

Belongs to the ATPase alpha/beta chains family. F-type ATPases have 2 components, CF(1) - the catalytic core - and CF(0) - the membrane proton channel. CF(1) has five subunits: alpha(3), beta(3), gamma(1), delta(1), epsilon(1). CF(0) has three main subunits: a(1), b(2) and c(9-12). The alpha and beta chains form an alternating ring which encloses part of the gamma chain. CF(1) is attached to CF(0) by a central stalk formed by the gamma and epsilon chains, while a peripheral stalk is formed by the delta and b chains.

Its subcellular location is the cell inner membrane. It carries out the reaction ATP + H2O + 4 H(+)(in) = ADP + phosphate + 5 H(+)(out). Produces ATP from ADP in the presence of a proton gradient across the membrane. The catalytic sites are hosted primarily by the beta subunits. This chain is ATP synthase subunit beta, found in Shewanella pealeana (strain ATCC 700345 / ANG-SQ1).